Here is a 640-residue protein sequence, read N- to C-terminus: Threonine--tRNA ligase (640 aa).

The region spanning 1–61 (MPIITLPNGD…TEDSTLQIIT (61 aa)) is the TGS domain. Residues 242–533 (DHRKIGKALD…LIEHYAGFMP (292 aa)) are catalytic. 3 residues coordinate Zn(2+): cysteine 333, histidine 384, and histidine 510.

The protein belongs to the class-II aminoacyl-tRNA synthetase family. Homodimer. Requires Zn(2+) as cofactor.

It localises to the cytoplasm. The catalysed reaction is tRNA(Thr) + L-threonine + ATP = L-threonyl-tRNA(Thr) + AMP + diphosphate + H(+). Functionally, catalyzes the attachment of threonine to tRNA(Thr) in a two-step reaction: L-threonine is first activated by ATP to form Thr-AMP and then transferred to the acceptor end of tRNA(Thr). Also edits incorrectly charged L-seryl-tRNA(Thr). In Acinetobacter baumannii (strain SDF), this protein is Threonine--tRNA ligase.